Here is a 360-residue protein sequence, read N- to C-terminus: Probable cinnamyl alcohol dehydrogenase 6 (360 aa).

Cys48 provides a ligand contact to Zn(2+). Thr50 serves as a coordination point for NADP(+). Zn(2+) is bound by residues His70, Glu71, Cys101, Cys104, Cys107, Cys115, and Cys164. Residues Thr168, Gly192 to Gly197, Ser215 to Lys220, Thr255, Gly279, and Ser302 to Thr304 each bind NADP(+).

The protein belongs to the zinc-containing alcohol dehydrogenase family. Homodimer. Zn(2+) serves as cofactor.

The catalysed reaction is (E)-cinnamyl alcohol + NADP(+) = (E)-cinnamaldehyde + NADPH + H(+). It catalyses the reaction (E)-coniferol + NADP(+) = (E)-coniferaldehyde + NADPH + H(+). The enzyme catalyses (E)-sinapyl alcohol + NADP(+) = (E)-sinapaldehyde + NADPH + H(+). It carries out the reaction (E)-4-coumaroyl alcohol + NADP(+) = (E)-4-coumaraldehyde + NADPH + H(+). The catalysed reaction is (E)-caffeyl alcohol + NADP(+) = (E)-caffeyl aldehyde + NADPH + H(+). The protein operates within aromatic compound metabolism; phenylpropanoid biosynthesis. Its function is as follows. Involved in lignin biosynthesis. Catalyzes the final step specific for the production of lignin monomers. Catalyzes the NADPH-dependent reduction of coniferaldehyde, 5-hydroxyconiferaldehyde, sinapaldehyde, 4-coumaraldehyde and caffeyl aldehyde to their respective alcohols. The sequence is that of Probable cinnamyl alcohol dehydrogenase 6 from Oryza sativa subsp. japonica (Rice).